Consider the following 378-residue polypeptide: Chaperone protein DnaJ (378 aa).

In terms of domain architecture, J spans 5–69; that stretch reads EYYDRLGVSK…QKRAAYDQYG (65 aa). The segment at 134–216 adopts a CR-type zinc-finger fold; the sequence is GVEKEVSYNR…CHGTGHEKQA (83 aa). Positions 147, 150, 164, 167, 190, 193, 204, and 207 each coordinate Zn(2+). 4 CXXCXGXG motif repeats span residues 147–154, 164–171, 190–197, and 204–211; these read CGTCLGSG, CRKCHGSG, CDICHGSG, and CQTCHGTG.

Belongs to the DnaJ family. Homodimer. Zn(2+) serves as cofactor.

Its subcellular location is the cytoplasm. Participates actively in the response to hyperosmotic and heat shock by preventing the aggregation of stress-denatured proteins and by disaggregating proteins, also in an autonomous, DnaK-independent fashion. Unfolded proteins bind initially to DnaJ; upon interaction with the DnaJ-bound protein, DnaK hydrolyzes its bound ATP, resulting in the formation of a stable complex. GrpE releases ADP from DnaK; ATP binding to DnaK triggers the release of the substrate protein, thus completing the reaction cycle. Several rounds of ATP-dependent interactions between DnaJ, DnaK and GrpE are required for fully efficient folding. Also involved, together with DnaK and GrpE, in the DNA replication of plasmids through activation of initiation proteins. This chain is Chaperone protein DnaJ, found in Streptococcus pyogenes.